The primary structure comprises 645 residues: uncharacterized protein (645 aa).

An N-terminal signal peptide occupies residues 1 to 23; it reads MPSSHRLSATILIFLSLTYISSS. Disordered regions lie at residues 30–58 and 92–129; these read ITDK…TTAS and NSNA…AGIP. Residues 92–102 are compositionally biased toward polar residues; the sequence is NSNANPYFSTT. N-linked (GlcNAc...) asparagine glycosylation is present at Asn107. The span at 107–119 shows a compositional bias: basic and acidic residues; that stretch reads NRSDSSQKARDPD. A PAN 1 domain is found at 135–214; the sequence is CFRRYENSII…QTRDYFEPTD (80 aa). 2 disulfides stabilise this stretch: Cys161-Cys187 and Cys165-Cys175. The segment at 225 to 247 is disordered; that stretch reads ESSSSAPSSEDEDSPPSPPPSAP. 2 PAN domains span residues 281-369 and 378-465; these read CPRG…EKIC and CPST…EVEC. Disulfide bonds link Cys281-Cys369, Cys313-Cys341, Cys317-Cys329, Cys378-Cys465, Cys407-Cys436, and Cys411-Cys422. Residue Asn421 is glycosylated (N-linked (GlcNAc...) asparagine). A compositionally biased stretch (basic and acidic residues) spans 556 to 567; sequence AGELENNDHEQI. Residues 556 to 582 form a disordered region; the sequence is AGELENNDHEQIEDNNTDASEDPVPTK. Asn570 is a glycosylation site (N-linked (GlcNAc...) asparagine).

This is an uncharacterized protein from Caenorhabditis elegans.